A 100-amino-acid polypeptide reads, in one-letter code: UPF0473 protein LMHCC_1068 (100 aa).

Belongs to the UPF0473 family.

The polypeptide is UPF0473 protein LMHCC_1068 (Listeria monocytogenes serotype 4a (strain HCC23)).